We begin with the raw amino-acid sequence, 161 residues long: Putative pre-16S rRNA nuclease (161 aa).

This sequence belongs to the YqgF nuclease family.

It localises to the cytoplasm. Functionally, could be a nuclease involved in processing of the 5'-end of pre-16S rRNA. The protein is Putative pre-16S rRNA nuclease of Bradyrhizobium sp. (strain BTAi1 / ATCC BAA-1182).